A 317-amino-acid polypeptide reads, in one-letter code: Porphobilinogen deaminase (317 aa).

Cysteine 245 carries the post-translational modification S-(dipyrrolylmethanemethyl)cysteine.

Belongs to the HMBS family. In terms of assembly, monomer. It depends on dipyrromethane as a cofactor.

It catalyses the reaction 4 porphobilinogen + H2O = hydroxymethylbilane + 4 NH4(+). It functions in the pathway porphyrin-containing compound metabolism; protoporphyrin-IX biosynthesis; coproporphyrinogen-III from 5-aminolevulinate: step 2/4. The protein operates within porphyrin-containing compound metabolism; chlorophyll biosynthesis. In terms of biological role, tetrapolymerization of the monopyrrole PBG into the hydroxymethylbilane pre-uroporphyrinogen in several discrete steps. This chain is Porphobilinogen deaminase, found in Synechococcus sp. (strain CC9902).